A 306-amino-acid chain; its full sequence is Serine/threonine-protein phosphatase PP2A-2 catalytic subunit (306 aa).

Residues Asp-54, His-56, Asp-82, and Asn-114 each contribute to the Mn(2+) site. The active-site Proton donor is the His-115. Mn(2+) is bound by residues His-164 and His-238. Leu-306 is subject to Leucine methyl ester.

This sequence belongs to the PPP phosphatase family. PP-2A subfamily. In terms of assembly, PP2A consists of a common heterodimeric core enzyme, composed of a 36 kDa catalytic subunit (subunit C) and a 65 kDa constant regulatory subunit (subunit A), that associates with a variety of regulatory subunits such as subunits B (the R2/B/PR55/B55, R3/B''/PR72/PR130/PR59 and R5/B'/B56 families). Interacts with B'THETA. Interacts with HDA14. Interacts with SRK2E/OST1. Interacts with TAP46. It depends on Mn(2+) as a cofactor. Reversibly methyl esterified on Leu-306 by leucine carboxyl methyltransferase 1 (LCMT1) and pectin methylesterase 1 (PME1). Carboxyl methylation influences the affinity of the catalytic subunit for the different regulatory subunits, thereby modulating the PP2A holoenzyme's substrate specificity, enzyme activity and cellular localization. In terms of processing, phosphorylation of either threonine (by autophosphorylation-activated protein kinase) or tyrosine results in inactivation of the phosphatase. Auto-dephosphorylation has been suggested as a mechanism for reactivation. As to expression, expressed in root meristem, emerging lateral roots, leaf vasculature, stipules, guard cells, anthers and pollen grains.

It localises to the cytoplasm. Its subcellular location is the cytosol. The protein localises to the nucleus. The protein resides in the peroxisome. The catalysed reaction is O-phospho-L-seryl-[protein] + H2O = L-seryl-[protein] + phosphate. It carries out the reaction O-phospho-L-threonyl-[protein] + H2O = L-threonyl-[protein] + phosphate. In terms of biological role, dephosphorylates and activates the actin-depolymerizing factor ADF1, which, in turn, regulates actin cytoskeleton remodeling and is involved in the blue light photoreceptor PHOT2-mediated chloroplast avoidance movements. Associates with the serine/threonine-protein phosphatase PP2A regulatory subunits A and B' to positively regulates beta-oxidation of fatty acids and protoauxins in peroxisomes by dephosphorylating peroxisomal beta-oxidation-related proteins. Acts as a negative regulator of abscisic acid (ABA) signaling. May regulate ABA-dependent gene expression. Involved in the light-dependent activation of nitrate reductase. In Arabidopsis thaliana (Mouse-ear cress), this protein is Serine/threonine-protein phosphatase PP2A-2 catalytic subunit.